A 319-amino-acid chain; its full sequence is 12-(S)-hydroxy-5,8,10,14-eicosatetraenoic acid receptor (319 aa).

The Extracellular portion of the chain corresponds to methionine 1–alanine 16. N-linked (GlcNAc...) asparagine glycosylation is present at asparagine 5. Residues valine 17–tryptophan 37 traverse the membrane as a helical segment. Topologically, residues threonine 38–tyrosine 52 are cytoplasmic. Residues leucine 53 to phenylalanine 73 form a helical membrane-spanning segment. Over tyrosine 74–histidine 91 the chain is Extracellular. Residues phenylalanine 92–leucine 110 traverse the membrane as a helical segment. Over aspartate 111–alanine 131 the chain is Cytoplasmic. Residues leucine 132–isoleucine 152 traverse the membrane as a helical segment. At serine 153–alanine 180 the chain is on the extracellular side. A helical transmembrane segment spans residues leucine 181–isoleucine 201. Residues arginine 202–arginine 219 lie on the Cytoplasmic side of the membrane. The chain crosses the membrane as a helical span at residues alanine 220–leucine 240. The Extracellular segment spans residues alanine 241 to aspartate 265. The helical transmembrane segment at valine 266 to phenylalanine 284 threads the bilayer. The Cytoplasmic segment spans residues serine 285 to serine 319.

Belongs to the G-protein coupled receptor 1 family. As to quaternary structure, interacts with KRAS; in a farnesylation-dependent manner.

The protein resides in the cell membrane. In terms of biological role, high-affinity receptor for 12-(S)-hydroxy-5,8,10,14-eicosatetraenoic acid (12-S-HETE), with much lower affinities for other HETE isomers. 12-S-HETE is a eicosanoid, a 12-lipoxygenase (ALOX12) metabolite of arachidonic acid, involved in many physiologic and pathologic processes. 12-S-HETE-binding leads to activation of ERK1/2 (MAPK3/MAPK1), MEK, and NF-kappa-B pathways leading to cell growth. Plays a crucial role for proliferation, survival and macropinocytosis of KRAS-dependent cancer cells by mediating the translocation of KRAS from the endoplasmic reticulum to the plasma membrane (PM) and its association with the PM. Contributes to enhanced immune responses by inducing dendrite protrusion of small intestinal CX3CR1(+) phagocytes for the uptake of luminal antigens. Acts also as a key receptor for 12-(S)-HETE-mediated liver ischemia reperfusion injury. Its function is as follows. Proton-sensing G protein-coupled receptor. The protein is 12-(S)-hydroxy-5,8,10,14-eicosatetraenoic acid receptor (GPR31) of Homo sapiens (Human).